A 145-amino-acid chain; its full sequence is 3-dehydroquinate dehydratase (145 aa).

Residue Tyr-22 is the Proton acceptor of the active site. Asn-71, His-77, and Asp-84 together coordinate substrate. His-97 (proton donor) is an active-site residue. Residues 98-99 and Arg-108 contribute to the substrate site; that span reads LS.

This sequence belongs to the type-II 3-dehydroquinase family. In terms of assembly, homododecamer.

It carries out the reaction 3-dehydroquinate = 3-dehydroshikimate + H2O. Its pathway is metabolic intermediate biosynthesis; chorismate biosynthesis; chorismate from D-erythrose 4-phosphate and phosphoenolpyruvate: step 3/7. Its function is as follows. Catalyzes a trans-dehydration via an enolate intermediate. The sequence is that of 3-dehydroquinate dehydratase from Francisella tularensis subsp. mediasiatica (strain FSC147).